Consider the following 247-residue polypeptide: Centromere protein H (247 aa).

Met1 carries the N-acetylmethionine modification. A compositionally biased stretch (acidic residues) spans 1 to 14 (MEEQPQMQDADEPA). A disordered region spans residues 1–34 (MEEQPQMQDADEPADSGGEGRAGGPPQVAGAQAA). Residue Ser16 is modified to Phosphoserine. Over residues 24-34 (GPPQVAGAQAA) the composition is skewed to low complexity. Residues 47 to 192 (RAQTKQQLLE…KIDLDSMENS (146 aa)) are a coiled coil. Lys67 participates in a covalent cross-link: Glycyl lysine isopeptide (Lys-Gly) (interchain with G-Cter in SUMO2). The residue at position 68 (Thr68) is a Phosphothreonine.

This sequence belongs to the CENP-H/MCM16 family. Self-associates. Component of the CENPA-NAC complex, at least composed of CENPA, CENPC, CENPH, CENPM, CENPN, CENPT and CENPU. The CENPA-NAC complex interacts with the CENPA-CAD complex, composed of CENPI, CENPK, CENPL, CENPO, CENPP, CENPQ, CENPR and CENPS. Interacts directly with CENPK. Interacts with KIF2C and NDC80. Interacts with TRIM36.

It localises to the nucleus. The protein localises to the chromosome. The protein resides in the centromere. Its subcellular location is the kinetochore. Component of the CENPA-NAC (nucleosome-associated) complex, a complex that plays a central role in assembly of kinetochore proteins, mitotic progression and chromosome segregation. The CENPA-NAC complex recruits the CENPA-CAD (nucleosome distal) complex and may be involved in incorporation of newly synthesized CENPA into centromeres. Required for chromosome congression and efficiently align the chromosomes on a metaphase plate. The sequence is that of Centromere protein H from Homo sapiens (Human).